We begin with the raw amino-acid sequence, 386 residues long: MLQEMHKKFESLFDVKADVRAFAPGRINLIGEHTDYNGGYVFPAAIELGTYGLASKRTDRIIQLYSNNFEDTGIVSFTLDELEFNEQHDWANYPKGVVKYLKEEFNDINQGFNILVEGNIPNGASLSSSASIELLTGWLIKQLFNLHLERLQLIKLGQVVENKFMGVNSGIMDQFIIGMGKAEHAILLDTATLDFDYVPAKFGDYVISIMNTNKRRSLTESKYNERRSECENALSQLQQQLEITSLGELSLAQFEKYQSLITDEVVCRRAKHAISENERTKLAHKALADNNFEQFGQLLNASHKSLKEDYEVTGIELDTLAETAQQVEGVLGARMTGAGFAGCAIALVDKNSIQKLEDEVSKAYIDKIGYAPSFYHVGISDGVKAL.

Glu-32–Asp-35 contributes to the substrate binding site. Residues Ser-66 and Gly-123–Ser-129 each bind ATP. Residues Ser-129 and Glu-161 each contribute to the Mg(2+) site. Asp-173 (proton acceptor) is an active-site residue. Tyr-223 provides a ligand contact to substrate.

Belongs to the GHMP kinase family. GalK subfamily.

It localises to the cytoplasm. The enzyme catalyses alpha-D-galactose + ATP = alpha-D-galactose 1-phosphate + ADP + H(+). The protein operates within carbohydrate metabolism; galactose metabolism. Catalyzes the transfer of the gamma-phosphate of ATP to D-galactose to form alpha-D-galactose-1-phosphate (Gal-1-P). The sequence is that of Galactokinase from Staphylococcus saprophyticus subsp. saprophyticus (strain ATCC 15305 / DSM 20229 / NCIMB 8711 / NCTC 7292 / S-41).